We begin with the raw amino-acid sequence, 141 residues long: Flagellar assembly factor FliW 1 (141 aa).

The protein belongs to the FliW family. In terms of assembly, interacts with translational regulator CsrA and flagellin(s).

It localises to the cytoplasm. Acts as an anti-CsrA protein, binds CsrA and prevents it from repressing translation of its target genes, one of which is flagellin. Binds to flagellin and participates in the assembly of the flagellum. This Desulfotalea psychrophila (strain LSv54 / DSM 12343) protein is Flagellar assembly factor FliW 1.